The primary structure comprises 137 residues: Large ribosomal subunit protein uL16 (137 aa).

This sequence belongs to the universal ribosomal protein uL16 family. Part of the 50S ribosomal subunit.

Its function is as follows. Binds 23S rRNA and is also seen to make contacts with the A and possibly P site tRNAs. The protein is Large ribosomal subunit protein uL16 of Spiroplasma citri.